The sequence spans 78 residues: Omega-conotoxin-like Ac6.5 (78 aa).

An N-terminal signal peptide occupies residues 1-22 (MKLTCVVIVAVLLLTACQLLTA). Positions 23-42 (DDSRGTQKHRSLRSTTKVSK) are excised as a propeptide. 3 disulfide bridges follow: Cys46–Cys62, Cys53–Cys65, and Cys61–Cys72. Pro55 and Pro67 each carry 4-hydroxyproline.

It belongs to the conotoxin O1 superfamily. Expressed by the venom duct.

It localises to the secreted. Its function is as follows. Omega-conotoxins act at presynaptic membranes, they bind and block voltage-gated calcium channels (Cav). In Conus achatinus (Little frog cone), this protein is Omega-conotoxin-like Ac6.5.